The following is a 144-amino-acid chain: Deoxyuridine 5'-triphosphate nucleotidohydrolase (144 aa).

Substrate-binding positions include 63 to 65, asparagine 76, and 80 to 82; these read RSG and TID.

The protein belongs to the dUTPase family. It depends on Mg(2+) as a cofactor.

It catalyses the reaction dUTP + H2O = dUMP + diphosphate + H(+). It participates in pyrimidine metabolism; dUMP biosynthesis; dUMP from dCTP (dUTP route): step 2/2. This enzyme is involved in nucleotide metabolism: it produces dUMP, the immediate precursor of thymidine nucleotides and it decreases the intracellular concentration of dUTP so that uracil cannot be incorporated into DNA. This Porphyromonas gingivalis (strain ATCC 33277 / DSM 20709 / CIP 103683 / JCM 12257 / NCTC 11834 / 2561) protein is Deoxyuridine 5'-triphosphate nucleotidohydrolase.